The chain runs to 212 residues: Methylthioribulose-1-phosphate dehydratase (212 aa).

His97 and His99 together coordinate Zn(2+).

It belongs to the aldolase class II family. MtnB subfamily. Homotetramer. Requires Zn(2+) as cofactor.

It catalyses the reaction 5-(methylsulfanyl)-D-ribulose 1-phosphate = 5-methylsulfanyl-2,3-dioxopentyl phosphate + H2O. Its pathway is amino-acid biosynthesis; L-methionine biosynthesis via salvage pathway; L-methionine from S-methyl-5-thio-alpha-D-ribose 1-phosphate: step 2/6. In terms of biological role, catalyzes the dehydration of methylthioribulose-1-phosphate (MTRu-1-P) into 2,3-diketo-5-methylthiopentyl-1-phosphate (DK-MTP-1-P). In Bacillus cereus (strain ATCC 10987 / NRS 248), this protein is Methylthioribulose-1-phosphate dehydratase.